Consider the following 197-residue polypeptide: Chaperone protein dnaJ 20, chloroplastic (197 aa).

The transit peptide at 1-60 (MKCYKSSSILSTNHHPFFYKQQPISSLQPTSIPTTISYPTRTRFSSTRIQSRLTHDDPVK) directs the protein to the chloroplast. Residues 66–133 (SFYDLLGVTE…RRRVLYDRDL (68 aa)) enclose the J domain. Residues 169-197 (SGLRRRSNQKDNNTMSWAARMRRQQQESS) are disordered.

This sequence belongs to the DnaJ family. C/III subfamily. As to expression, light-grown seedlings.

It localises to the plastid. The protein resides in the chloroplast. Functionally, plays a continuous role in plant development probably in the structural organization of compartments. In Arabidopsis thaliana (Mouse-ear cress), this protein is Chaperone protein dnaJ 20, chloroplastic (ATJ20).